Consider the following 452-residue polypeptide: Neuromedin-K receptor (452 aa).

At 1–71 (MASVPRGENW…TNQFVQPSWR (71 aa)) the chain is on the extracellular side. Residues N9, N23, N40, and N60 are each glycosylated (N-linked (GlcNAc...) asparagine). Residues 72–94 (IALWSLAYGLVVAVAVFGNLIVI) traverse the membrane as a helical segment. At 95–104 (WIILAHKRMR) the chain is on the cytoplasmic side. A helical transmembrane segment spans residues 105-126 (TVTNYFLVNLAFSDASVAAFNT). The Extracellular portion of the chain corresponds to 127–146 (LINFIYGLHSEWYFGANYCR). Cysteines 145 and 220 form a disulfide. A helical transmembrane segment spans residues 147–168 (FQNFFPITAVFASIYSMTAIAV). Topologically, residues 169–188 (DRYMAIIDPLKPRLSATATK) are cytoplasmic. The chain crosses the membrane as a helical span at residues 189–209 (IVIGSIWILAFLLAFPQCLYS). Residues 210–232 (KIKVMPGRTLCYVQWPEGPKQHF) are Extracellular-facing. A helical membrane pass occupies residues 233–257 (TYHIIVIILVYCFPLLIMGVTYTIV). The Cytoplasmic portion of the chain corresponds to 258 to 286 (GITLWGGEIPGDTCDKYHEQLKAKRKVVK). A helical membrane pass occupies residues 287 to 308 (MMIIVVVTFAICWLPYHVYFIL). At 309 to 321 (TAIYQQLNRWKYI) the chain is on the extracellular side. A helical membrane pass occupies residues 322–346 (QQVYLASFWLAMSSTMYNPIIYCCL). The Cytoplasmic segment spans residues 347–452 (NKRFRAGFKR…SPYTSVDEYS (106 aa)). A lipid anchor (S-palmitoyl cysteine) is attached at C361. Positions 400 to 452 (FDPNDGDPTKSSRKKRAVPRDPSANGCSHRGSKSASTTSSFISSPYTSVDEYS) are disordered. The span at 432–452 (KSASTTSSFISSPYTSVDEYS) shows a compositional bias: low complexity.

The protein belongs to the G-protein coupled receptor 1 family. Post-translationally, the anchoring of this receptor to the plasma membrane is probably mediated by the palmitoylation of a cysteine residue.

It is found in the cell membrane. In terms of biological role, this is a receptor for the tachykinin neuropeptide neuromedin-K (neurokinin B). It is associated with G proteins that activate a phosphatidylinositol-calcium second messenger system. The rank order of affinity of this receptor to tachykinins is: neuromedin-K &gt; substance K &gt; substance P. This is Neuromedin-K receptor (Tacr3) from Rattus norvegicus (Rat).